The chain runs to 110 residues: uncharacterized protein (110 aa).

The segment covering 1–20 has biased composition (polar residues); the sequence is MNQQNQKISNPQTPVPTTSE. The tract at residues 1 to 24 is disordered; sequence MNQQNQKISNPQTPVPTTSEMNDR.

This is an uncharacterized protein from Bacillus subtilis (strain 168).